The primary structure comprises 70 residues: Protein SlyX homolog (70 aa).

This sequence belongs to the SlyX family.

The polypeptide is Protein SlyX homolog (Shewanella sp. (strain MR-4)).